Here is a 386-residue protein sequence, read N- to C-terminus: 2-isopropylmalate synthase (386 aa).

Positions 15–269 (IRIFDTTLRD…ETNVKTWKLY (255 aa)) constitute a Pyruvate carboxyltransferase domain. 4 residues coordinate a divalent metal cation: aspartate 24, histidine 207, histidine 209, and asparagine 243.

The protein belongs to the alpha-IPM synthase/homocitrate synthase family. As to quaternary structure, homodimer. The cofactor is a divalent metal cation.

The catalysed reaction is 3-methyl-2-oxobutanoate + acetyl-CoA + H2O = (2S)-2-isopropylmalate + CoA + H(+). It participates in amino-acid biosynthesis; L-leucine biosynthesis; L-leucine from 3-methyl-2-oxobutanoate: step 1/4. In terms of biological role, catalyzes the condensation of the acetyl group of acetyl-CoA with 3-methyl-2-oxobutanoate (2-oxoisovalerate) to form 3-carboxy-3-hydroxy-4-methylpentanoate (2-isopropylmalate). Carries out the first step of the leucine biosynthesis pathway. The chain is 2-isopropylmalate synthase (leuA) from Saccharolobus solfataricus (strain ATCC 35092 / DSM 1617 / JCM 11322 / P2) (Sulfolobus solfataricus).